Reading from the N-terminus, the 221-residue chain is Charged multivesicular body protein 3 (221 aa).

A lipid anchor (N-myristoyl glycine) is attached at G2. A coiled-coil region spans residues 22–54 (KIRKEMRVIDRQIRDIQREEEKVKRSIKDAAKK). Important for autoinhibitory function regions lie at residues 59–64 (VCIILA) and 168–169 (IL). The stretch at 144 to 221 (LEDTLEGMDD…MQSRLAALRS (78 aa)) forms a coiled coil. The tract at residues 181–221 (PSKVTDLPDPVAIGATAAPEEESEEEEEIEEMQSRLAALRS) is disordered. The segment covering 199 to 211 (PEEESEEEEEIEE) has biased composition (acidic residues). Positions 200 to 210 (EEESEEEEEIE) match the MIT-interacting motif motif. Interaction with STAMBP regions lie at residues 202-206 (ESEEE) and 220-221 (RS).

The protein belongs to the SNF7 family. Probable core component of the endosomal sorting required for transport complex III (ESCRT-III). ESCRT-III components are thought to multimerize to form a flat lattice on the perimeter membrane of the endosome. Several assembly forms of ESCRT-III may exist that interact and act sequentially.

Its subcellular location is the cytoplasm. It localises to the cytosol. The protein localises to the membrane. It is found in the endosome. The protein resides in the late endosome membrane. Its function is as follows. Probable core component of the endosomal sorting required for transport complex III (ESCRT-III) which is involved in multivesicular bodies (MVBs) formation and sorting of endosomal cargo proteins into MVBs. MVBs contain intraluminal vesicles (ILVs) that are generated by invagination and scission from the limiting membrane of the endosome and mostly are delivered to lysosomes enabling degradation of membrane proteins, such as stimulated growth factor receptors, lysosomal enzymes and lipids. Involved in late stages of cytokinesis. Plays a role in endosomal sorting/trafficking of EGF receptor. This chain is Charged multivesicular body protein 3 (chmp3), found in Danio rerio (Zebrafish).